Consider the following 429-residue polypeptide: Na(+)/H(+) antiporter NhaA 1 (429 aa).

Helical transmembrane passes span 32–52 (ISGGLLLAATVLALGWANSPW), 73–93 (LSVQQWAADGLLAIFFFVAGL), 111–131 (VVPVAAAAGGVAVPAVLYSLL), 140–160 (GWAIPTATDIAFALSVLAVVG), 170–190 (FLLTLAVVDDLLAIVIIAVAY), 193–213 (ELSVVPLVAAVVPLAAFTLLV), 219–239 (AWWLLLPLAVLTWALVHASGV), 243–263 (VAGVLLAFAVPVLRSEGAGGP), 284–304 (VAVPVFAFCSAGVTVGGLGGL), 316–336 (VVVGLVVGKAIGIFTTTWLVA), 349–369 (WVDVAGLALLGGVGFTVSLLI), and 383–403 (HVKVGVLTASVTAALLATVVL).

The protein belongs to the NhaA Na(+)/H(+) (TC 2.A.33) antiporter family.

Its subcellular location is the cell membrane. The enzyme catalyses Na(+)(in) + 2 H(+)(out) = Na(+)(out) + 2 H(+)(in). Functionally, na(+)/H(+) antiporter that extrudes sodium in exchange for external protons. This is Na(+)/H(+) antiporter NhaA 1 from Frankia alni (strain DSM 45986 / CECT 9034 / ACN14a).